The sequence spans 233 residues: Translation initiation factor 6 (233 aa).

Belongs to the eIF-6 family.

In terms of biological role, binds to the 50S ribosomal subunit and prevents its association with the 30S ribosomal subunit to form the 70S initiation complex. This chain is Translation initiation factor 6, found in Aeropyrum pernix (strain ATCC 700893 / DSM 11879 / JCM 9820 / NBRC 100138 / K1).